Here is a 219-residue protein sequence, read N- to C-terminus: MLRAGAPTGDLPRAGEVHTGTTIMAVEFDGGVVMGSDSRVSAGEAVVNRVFDKLSPLHERIYCALSGSAADAQAVADMAAYQLELHGIELEEPPLVLAAANVVRNISYKYREDLSAHLMVAGWDQREGGQVYGTLGGMLTRQPFAIGGSGSTFIYGYVDAAYKPGMSPEECRRFTTDAIALAMSRDGSSGGVIYLVTITAAGVDHRVILGNELPKFYDE.

Positions 1–20 (MLRAGAPTGDLPRAGEVHTG) are cleaved as a propeptide — removed in mature form. T21 acts as the Nucleophile in catalysis. Residues K53 and K109 each carry the N6-acetyllysine modification.

Belongs to the peptidase T1B family. In terms of assembly, the 26S proteasome consists of a 20S proteasome core and two 19S regulatory subunits. The 20S proteasome core is composed of 28 subunits that are arranged in four stacked rings, resulting in a barrel-shaped structure. The two end rings are each formed by seven alpha subunits, and the two central rings are each formed by seven beta subunits. The catalytic chamber with the active sites is on the inside of the barrel. Component of the immunoproteasome, where it displaces the equivalent housekeeping subunit PSMB6. Component of the spermatoproteasome, a form of the proteasome specifically found in testis. (Microbial infection) Interacts with HIV-1 TAT protein. Post-translationally, autocleaved. The resulting N-terminal Thr residue of the mature subunit is responsible for the nucleophile proteolytic activity.

The protein localises to the cytoplasm. Its subcellular location is the nucleus. The catalysed reaction is Cleavage of peptide bonds with very broad specificity.. The proteasome is a multicatalytic proteinase complex which is characterized by its ability to cleave peptides with Arg, Phe, Tyr, Leu, and Glu adjacent to the leaving group at neutral or slightly basic pH. The proteasome has an ATP-dependent proteolytic activity. This subunit is involved in antigen processing to generate class I binding peptides. Replacement of PSMB6 by PSMB9 increases the capacity of the immunoproteasome to cleave model peptides after hydrophobic and basic residues. The sequence is that of Proteasome subunit beta type-9 (PSMB9) from Homo sapiens (Human).